Here is a 134-residue protein sequence, read N- to C-terminus: MTIIRKKHPLIKIINHSFIDLPTPSNISSWWNFGSLLGLCLAVQILTGLFLAMHYTSDTATAFSSVAHICRDVNYGWLIRYMHANGASMFFICLFLHVGRGVYYGSYNMIETWNMGIILLFAVMATAFMGYVLP.

A run of 3 helical transmembrane segments spans residues 33–53, 77–98, and 113–133; these read FGSL…FLAM, WLIR…FLHV, and WNMG…GYVL. 2 residues coordinate heme b: His83 and His97.

The protein belongs to the cytochrome b family. As to quaternary structure, the cytochrome bc1 complex contains 11 subunits: 3 respiratory subunits (MT-CYB, CYC1 and UQCRFS1), 2 core proteins (UQCRC1 and UQCRC2) and 6 low-molecular weight proteins (UQCRH/QCR6, UQCRB/QCR7, UQCRQ/QCR8, UQCR10/QCR9, UQCR11/QCR10 and a cleavage product of UQCRFS1). This cytochrome bc1 complex then forms a dimer. Requires heme b as cofactor.

The protein resides in the mitochondrion inner membrane. Functionally, component of the ubiquinol-cytochrome c reductase complex (complex III or cytochrome b-c1 complex) that is part of the mitochondrial respiratory chain. The b-c1 complex mediates electron transfer from ubiquinol to cytochrome c. Contributes to the generation of a proton gradient across the mitochondrial membrane that is then used for ATP synthesis. The protein is Cytochrome b (MT-CYB) of Microtus subterraneus (European pine vole).